We begin with the raw amino-acid sequence, 153 residues long: NADH dehydrogenase [ubiquinone] 1 beta subcomplex subunit 11, mitochondrial (153 aa).

Residues 1–29 (MAAGLFGLSARLLLAAAATRGLPAARVRW) constitute a mitochondrion transit peptide. The segment at 40–77 (PSAVAGKRPPEPTTQWQEDPEPEDENLYEKNPDSHGYD) is disordered. Residues 66–77 (LYEKNPDSHGYD) are compositionally biased toward basic and acidic residues. The chain crosses the membrane as a helical span at residues 89-109 (LVFFFGVSIILVLGSTFVAYL).

The protein belongs to the complex I NDUFB11 subunit family. As to quaternary structure, complex I is composed of 45 different subunits. Interacts with BCAP31.

The protein resides in the mitochondrion inner membrane. Accessory subunit of the mitochondrial membrane respiratory chain NADH dehydrogenase (Complex I), that is believed not to be involved in catalysis. Complex I functions in the transfer of electrons from NADH to the respiratory chain. The immediate electron acceptor for the enzyme is believed to be ubiquinone. The sequence is that of NADH dehydrogenase [ubiquinone] 1 beta subcomplex subunit 11, mitochondrial (NDUFB11) from Pan troglodytes (Chimpanzee).